Here is a 638-residue protein sequence, read N- to C-terminus: Paramyosin (638 aa).

A coiled-coil region spans residues 1-638 (FSPSTTRLES…EGDISVMQAD (638 aa)).

The protein belongs to the paramyosin family. As to quaternary structure, homodimer.

It is found in the cytoplasm. The protein resides in the myofibril. Its function is as follows. Paramyosin is a major structural component of many thick filaments isolated from invertebrate muscles. The protein is Paramyosin of Opisthorchis felineus.